The chain runs to 267 residues: PHD finger protein ALFIN-LIKE 7 (267 aa).

The disordered stretch occupies residues 162–207 (TKVSNGSSKSNKSNPKPSKQSNSNSKPAKPPQPKDEEDSGPEGAED). Positions 165–188 (SNGSSKSNKSNPKPSKQSNSNSKP) are enriched in low complexity. Residues 196-207 (DEEDSGPEGAED) show a composition bias toward acidic residues. A PHD-type zinc finger spans residues 211-263 (AYMCGACGETYANGEFWICCDVCEKWFHGKCVRITPAKAEHIKQYKCPGCSSK).

Belongs to the Alfin family. In terms of assembly, interacts with H3K4me3 and to a lesser extent with H3K4me2.

Its subcellular location is the nucleus. In terms of biological role, histone-binding component that specifically recognizes H3 tails trimethylated on 'Lys-4' (H3K4me3), which mark transcription start sites of virtually all active genes. The protein is PHD finger protein ALFIN-LIKE 7 of Oryza sativa subsp. indica (Rice).